We begin with the raw amino-acid sequence, 368 residues long: Mitogen-activated protein kinase KSS1 (368 aa).

Residues 13 to 313 (YKLVDLIGEG…AAEALRHPYL (301 aa)) enclose the Protein kinase domain. ATP contacts are provided by residues 19 to 27 (IGEGAYGTV) and Lys-42. Asp-143 serves as the catalytic Proton acceptor. At Thr-183 the chain carries Phosphothreonine. A TXY motif is present at residues 183–185 (TEY). Tyr-185 bears the Phosphotyrosine mark.

The protein belongs to the protein kinase superfamily. Ser/Thr protein kinase family. MAP kinase subfamily. HOG1 sub-subfamily. In the nucleus, KSS1 forms a complex with DIG1, DIG2 and STE12; in contrast to FUS3 the interaction of KSS1 with STE12 does not depend on DIG1 and DIG2. Phosphorylated KSS1 shows reduced interaction with STE12. During pheromone activation and phosphorylation, KSS1 forms a membrane-associated complex with the scaffold protein STE5, the MAPKK STE7, the MAPKKK STE11, and the G-protein beta subunit GBB/STE4; interacting directly with POF1, STE7 and STE5 proteins. Mg(2+) serves as cofactor. In terms of processing, dually phosphorylated on Thr-183 and Tyr-185 by STE7 in response to pheromone or carbon/nitrogen limitation, which activates the enzyme. Activated FUS3 down-regulates KSS1 phosphorylation.

The protein localises to the nucleus. Its subcellular location is the cytoplasm. The protein resides in the periplasm. The catalysed reaction is L-seryl-[protein] + ATP = O-phospho-L-seryl-[protein] + ADP + H(+). It carries out the reaction L-threonyl-[protein] + ATP = O-phospho-L-threonyl-[protein] + ADP + H(+). Activated by tyrosine and threonine phosphorylation after pheromone treatment or carbon/nitrogen limitation. Its function is as follows. Together with closely related FUS3, KSS1 is the final kinase in the signal transduction cascade regulating activation/repression of the mating and filamentation pathways, induced by pheromone and nitrogen/carbon limitation, respectively. Phosphorylated KSS1 activates both pathways, whereas activated FUS3 activates the mating but suppresses the filamentation pathway. KSS1 activity is down-regulated by FUS3 during pheromone induction to prevent inappropriate activation of the filamentation pathway. During induction of filamentation, KSS1 activates the transcription factor STE12 resulting in its binding to and activation of filamentation specific genes. Non-activated KSS1 has a kinase-independent repressive effect on STE12 transcriptional activity, that is mediated by direct binding to STE12 and depends on the presence of DIG1 and DIG2, and that is required for the suppression of filamentation under normal growth conditions. SSN3/SRB10 contributes further to the suppression of filamentation under these conditions by reducing STE12 stability independent of KSS1. FUS3 can partially compensate for the lack of KSS1 but filamentation becomes constitutively induced at a low level in the absence of any signal. KSS1 phosphorylates STE7, STE5, FAR1, DIG1, DIG2, STE12, and SST2. This is Mitogen-activated protein kinase KSS1 (KSS1) from Saccharomyces cerevisiae (strain ATCC 204508 / S288c) (Baker's yeast).